The primary structure comprises 156 residues: Snaclec A2 (156 aa).

Residues 1–23 (MGRLISVSFGLLVVFLSLSGTGA) form the signal peptide. Disulfide bonds link C27/C38, C55/C154, and C129/C146. A C-type lectin domain is found at 34 to 155 (HEGHCYKVFN…CGQPYRFTCE (122 aa)).

This sequence belongs to the snaclec family. In terms of assembly, heterodimer; disulfide-linked. Expressed by the venom gland.

The protein resides in the secreted. In terms of biological role, interferes with one step of hemostasis (modulation of platelet aggregation, or coagulation cascade, for example). In Macrovipera lebetinus (Levantine viper), this protein is Snaclec A2.